The following is a 1847-amino-acid chain: Replication factor C small subunit (1847 aa).

3 DOD-type homing endonuclease domains span residues 179-311 (WLGY…RFGI), 780-927 (MLGL…ISGI), and 1348-1508 (LLGF…EFEV).

Belongs to the activator 1 small subunits family. RfcS subfamily. In terms of assembly, heteromultimer composed of small subunits (RfcS) and large subunits (RfcL). Post-translationally, this protein undergoes a protein self splicing that involves a post-translational excision of the intervening region (intein) followed by peptide ligation.

Part of the RFC clamp loader complex which loads the PCNA sliding clamp onto DNA. The sequence is that of Replication factor C small subunit (rfcS) from Methanocaldococcus jannaschii (strain ATCC 43067 / DSM 2661 / JAL-1 / JCM 10045 / NBRC 100440) (Methanococcus jannaschii).